Reading from the N-terminus, the 311-residue chain is Cytochrome c biogenesis protein CcsA (311 aa).

8 consecutive transmembrane segments (helical) span residues 11 to 31, 44 to 64, 68 to 88, 101 to 121, 146 to 166, 217 to 237, 251 to 268, and 280 to 300; these read VLLLGLMAFGALLLALPLAFW, VVQLLVVAANLLLTAQLLWRW, GHFPISNLYESLCFLAWGCTF, LVPAATTPMALVCVAFASFAL, VIMMSYAALLVGSLLSAAVLF, TITVGFLLLTVGIISGAVWAN, TWALICWLVYAAYLHTRL, and VAVSGLFVISVCYIGVNLLGI.

Belongs to the CcmF/CycK/Ccl1/NrfE/CcsA family. May interact with ccs1.

The protein localises to the cellular thylakoid membrane. Functionally, required during biogenesis of c-type cytochromes (cytochrome c6 and cytochrome f) at the step of heme attachment. The polypeptide is Cytochrome c biogenesis protein CcsA (Synechococcus sp. (strain RCC307)).